The sequence spans 113 residues: Large ribosomal subunit protein uL24 (113 aa).

Belongs to the universal ribosomal protein uL24 family. In terms of assembly, part of the 50S ribosomal subunit.

One of two assembly initiator proteins, it binds directly to the 5'-end of the 23S rRNA, where it nucleates assembly of the 50S subunit. Its function is as follows. One of the proteins that surrounds the polypeptide exit tunnel on the outside of the subunit. The polypeptide is Large ribosomal subunit protein uL24 (Micrococcus luteus (strain ATCC 4698 / DSM 20030 / JCM 1464 / CCM 169 / CCUG 5858 / IAM 1056 / NBRC 3333 / NCIMB 9278 / NCTC 2665 / VKM Ac-2230) (Micrococcus lysodeikticus)).